We begin with the raw amino-acid sequence, 308 residues long: NADH-cytochrome b5 reductase 1 (308 aa).

Residues 10 to 27 form a helical membrane-spanning segment; sequence INGVYIPSALLIFGTTII. The FAD-binding FR-type domain maps to 59–164; the sequence is TEFQNFVLKD…RGPKGAMVYT (106 aa). FAD is bound by residues 144 to 159 and 170 to 207; these read TTLRIGDKMKVRGPKG and HIGMIAGGTGITPMLQVIKAIIKGRPRNGGNDTTQIDL.

This sequence belongs to the flavoprotein pyridine nucleotide cytochrome reductase family. In terms of assembly, monomer. Component of the 2-(3-amino-3-carboxypropyl)histidine synthase complex composed of DPH1, DPH2, DPH3 and a NADH-dependent reductase, predominantly CBR1. It depends on FAD as a cofactor.

The protein localises to the mitochondrion outer membrane. The catalysed reaction is 2 Fe(III)-[cytochrome b5] + NADH = 2 Fe(II)-[cytochrome b5] + NAD(+) + H(+). The enzyme catalyses 2 Fe(3+)-[Dph3] + NADH = 2 Fe(2+)-[Dph3] + NAD(+) + H(+). It participates in protein modification; peptidyl-diphthamide biosynthesis. Functionally, NADH-dependent reductase for DPH3 and cytochrome b5. Required for the first step of diphthamide biosynthesis, a post-translational modification of histidine which occurs in elongation factor 2. DPH1 and DPH2 transfer a 3-amino-3-carboxypropyl (ACP) group from S-adenosyl-L-methionine (SAM) to a histidine residue, the reaction is assisted by a reduction system comprising DPH3 and a NADH-dependent reductase, predominantly CBR1. By reducing DPH3, also involved in the formation of the tRNA wobble base modification mcm5s 2U (5-methoxycarbonylmethyl-2-thiouridine), mediated by the elongator complex. The cytochrome b5/NADH cytochrome b5 reductase electron transfer system supports the catalytic activity of several sterol biosynthetic enzymes. The polypeptide is NADH-cytochrome b5 reductase 1 (CBR1) (Coccidioides immitis (strain RS) (Valley fever fungus)).